We begin with the raw amino-acid sequence, 233 residues long: MFRIVKWLIALPVGIFIFFNAYVYGNIITYRAVAPHRTAFMSMRMKQFEQEGRDVALDYRWVPYNRISTNLKKALIASEDVRFAGHGGFDWGGIQNAIRRNRNSGEVKAGGSTISQQLAKNLFLNESRNYLRKGEEAAITAMMEAVTDKNRIFELYLNSIEWHYGVFGAEAASRYFYKKPAADLTKQQAAKLTALVPAPLYYADHPKSKRLRNKTNIVLRRMGSAELPESDTD.

Residues 8 to 28 form a helical membrane-spanning segment; sequence LIALPVGIFIFFNAYVYGNII.

Belongs to the glycosyltransferase 51 family.

Its subcellular location is the cell inner membrane. It carries out the reaction [GlcNAc-(1-&gt;4)-Mur2Ac(oyl-L-Ala-gamma-D-Glu-L-Lys-D-Ala-D-Ala)](n)-di-trans,octa-cis-undecaprenyl diphosphate + beta-D-GlcNAc-(1-&gt;4)-Mur2Ac(oyl-L-Ala-gamma-D-Glu-L-Lys-D-Ala-D-Ala)-di-trans,octa-cis-undecaprenyl diphosphate = [GlcNAc-(1-&gt;4)-Mur2Ac(oyl-L-Ala-gamma-D-Glu-L-Lys-D-Ala-D-Ala)](n+1)-di-trans,octa-cis-undecaprenyl diphosphate + di-trans,octa-cis-undecaprenyl diphosphate + H(+). Its pathway is cell wall biogenesis; peptidoglycan biosynthesis. Functionally, peptidoglycan polymerase that catalyzes glycan chain elongation from lipid-linked precursors. In Neisseria gonorrhoeae (strain NCCP11945), this protein is Biosynthetic peptidoglycan transglycosylase.